The following is a 210-amino-acid chain: Urease accessory protein UreF (210 aa).

This sequence belongs to the UreF family. In terms of assembly, ureD, UreF and UreG form a complex that acts as a GTP-hydrolysis-dependent molecular chaperone, activating the urease apoprotein by helping to assemble the nickel containing metallocenter of UreC. The UreE protein probably delivers the nickel.

The protein resides in the cytoplasm. Required for maturation of urease via the functional incorporation of the urease nickel metallocenter. In Cereibacter sphaeroides (strain KD131 / KCTC 12085) (Rhodobacter sphaeroides), this protein is Urease accessory protein UreF.